The sequence spans 545 residues: Glucose-6-phosphate isomerase (545 aa).

The Proton donor role is filled by E353. Active-site residues include H384 and K510.

The protein belongs to the GPI family.

Its subcellular location is the cytoplasm. The catalysed reaction is alpha-D-glucose 6-phosphate = beta-D-fructose 6-phosphate. It participates in carbohydrate biosynthesis; gluconeogenesis. The protein operates within carbohydrate degradation; glycolysis; D-glyceraldehyde 3-phosphate and glycerone phosphate from D-glucose: step 2/4. Functionally, catalyzes the reversible isomerization of glucose-6-phosphate to fructose-6-phosphate. The sequence is that of Glucose-6-phosphate isomerase from Aromatoleum aromaticum (strain DSM 19018 / LMG 30748 / EbN1) (Azoarcus sp. (strain EbN1)).